The chain runs to 390 residues: uncharacterized protein (390 aa).

2 helical membrane passes run 27–47 (GGLITLVSGLIVIFIVLMEWI) and 356–376 (FGGFLSNVLALLGGCVTLASF).

The protein belongs to the ERGIC family.

It is found in the membrane. This is an uncharacterized protein from Schizosaccharomyces pombe (strain 972 / ATCC 24843) (Fission yeast).